A 267-amino-acid polypeptide reads, in one-letter code: LexA repressor (267 aa).

A disordered region spans residues 1 to 44 (MSIDESSDNPTPRPKLGRPPKSEADKRAEKEAQKDGKKPALSTR). Positions 20–38 (PKSEADKRAEKEAQKDGKK) are enriched in basic and acidic residues. The H-T-H motif DNA-binding region spans 65 to 85 (IREIADAVGLHSTSSVSYHLT). The segment at 111-140 (GQLTNESTKKNAGSPQPTSAAIPEPTTEGE) is disordered. The span at 112 to 129 (QLTNESTKKNAGSPQPTS) shows a compositional bias: polar residues. Catalysis depends on for autocatalytic cleavage activity residues Ser191 and Lys228.

The protein belongs to the peptidase S24 family. As to quaternary structure, homodimer.

The enzyme catalyses Hydrolysis of Ala-|-Gly bond in repressor LexA.. Functionally, represses a number of genes involved in the response to DNA damage (SOS response), including recA and lexA. In the presence of single-stranded DNA, RecA interacts with LexA causing an autocatalytic cleavage which disrupts the DNA-binding part of LexA, leading to derepression of the SOS regulon and eventually DNA repair. The sequence is that of LexA repressor from Corynebacterium jeikeium (strain K411).